Consider the following 54-residue polypeptide: Ovomucoid (54 aa).

Residues 4–54 (VDCSDYPKPACSLDYMPLCGSDSKTYSNKCNFCNAVVDSNGTLTLSHFEKC) form the Kazal-like domain. 3 disulfides stabilise this stretch: Cys6/Cys36, Cys14/Cys33, and Cys22/Cys54. Residue Asn43 is glycosylated (N-linked (GlcNAc...) asparagine).

It is found in the secreted. The polypeptide is Ovomucoid (Chroicocephalus ridibundus (Black-headed gull)).